We begin with the raw amino-acid sequence, 313 residues long: Ribosomal RNA small subunit methyltransferase H (313 aa).

S-adenosyl-L-methionine-binding positions include 35 to 37, aspartate 53, phenylalanine 80, aspartate 101, and glutamine 108; that span reads GGY.

Belongs to the methyltransferase superfamily. RsmH family.

It localises to the cytoplasm. It carries out the reaction cytidine(1402) in 16S rRNA + S-adenosyl-L-methionine = N(4)-methylcytidine(1402) in 16S rRNA + S-adenosyl-L-homocysteine + H(+). In terms of biological role, specifically methylates the N4 position of cytidine in position 1402 (C1402) of 16S rRNA. This chain is Ribosomal RNA small subunit methyltransferase H, found in Acidiphilium cryptum (strain JF-5).